The primary structure comprises 236 residues: Baculoviral IAP repeat-containing protein 8 (236 aa).

The BIR repeat unit spans residues 7-70 (WLITFGTWMY…KWYPGCKYLL (64 aa)). Zn(2+)-binding residues include Cys39, Cys42, His59, and Cys66. Residues 189-224 (CKICMDRHIAVVFIPCGHLVTCKQCAEAVDRCPMCN) form an RING-type zinc finger.

The protein belongs to the IAP family. In terms of assembly, binds to caspase-9.

Its subcellular location is the cytoplasm. Functionally, protects against apoptosis mediated by BAX. The protein is Baculoviral IAP repeat-containing protein 8 (BIRC8) of Gorilla gorilla gorilla (Western lowland gorilla).